The sequence spans 325 residues: MNLVSLQNSLDNATFAILLPTLLCYWTGVAFPNLKGLPAIGTAGMAIANLCMAALLGARWLEAGYFPISNLYESLFFLAWGLTAIHLLAEKLSGSRLVGAATSPLALGIVAFAAFTLPKEMRQAEPLVPALKSNWLMMHVSVMMVSYAALLVGSLLSVAFLVVTRGQAIELRGSSVGTGSFRQVKLNRASDLTIATAESGGSGGTAVLEQPVLQLAPEQLSLADTLDNVSYRVIGLGFPLLTIGIIAGAVWANEAWGSYWSWDPKETWALITWLVFAAYLHARITRGWQGRRPAILATVGFGVVWVCYLGVNLLGKGLHSYGWFF.

8 consecutive transmembrane segments (helical) span residues 14–34, 36–56, 68–88, 97–117, 142–162, 233–253, 260–280, and 294–314; these read TFAI…FPNL, GLPA…AALL, ISNL…IHLL, LVGA…AFTL, VMMV…AFLV, VIGL…VWAN, WSWD…AAYL, and AILA…VNLL.

It belongs to the CcmF/CycK/Ccl1/NrfE/CcsA family. As to quaternary structure, may interact with ccs1.

The protein localises to the cellular thylakoid membrane. In terms of biological role, required during biogenesis of c-type cytochromes (cytochrome c6 and cytochrome f) at the step of heme attachment. The chain is Cytochrome c biogenesis protein CcsA from Synechococcus sp. (strain ATCC 27144 / PCC 6301 / SAUG 1402/1) (Anacystis nidulans).